A 356-amino-acid chain; its full sequence is Phosphoserine aminotransferase (356 aa).

Arg41 provides a ligand contact to L-glutamate. Residues 75–76 (AT), Trp100, Thr147, Asp166, and Gln189 contribute to the pyridoxal 5'-phosphate site. Lys190 carries the post-translational modification N6-(pyridoxal phosphate)lysine. 227 to 228 (NT) is a pyridoxal 5'-phosphate binding site.

The protein belongs to the class-V pyridoxal-phosphate-dependent aminotransferase family. SerC subfamily. In terms of assembly, homodimer. Pyridoxal 5'-phosphate serves as cofactor.

It localises to the cytoplasm. The enzyme catalyses O-phospho-L-serine + 2-oxoglutarate = 3-phosphooxypyruvate + L-glutamate. It carries out the reaction 4-(phosphooxy)-L-threonine + 2-oxoglutarate = (R)-3-hydroxy-2-oxo-4-phosphooxybutanoate + L-glutamate. It participates in amino-acid biosynthesis; L-serine biosynthesis; L-serine from 3-phospho-D-glycerate: step 2/3. Its function is as follows. Catalyzes the reversible conversion of 3-phosphohydroxypyruvate to phosphoserine and of 3-hydroxy-2-oxo-4-phosphonooxybutanoate to phosphohydroxythreonine. This Exiguobacterium sp. (strain ATCC BAA-1283 / AT1b) protein is Phosphoserine aminotransferase.